An 813-amino-acid chain; its full sequence is Lon protease (813 aa).

In terms of domain architecture, Lon N-terminal spans 30–225 (LPILPVRNIV…WLLQLMDKDI (196 aa)). ATP is bound at residue 376-383 (GPPGVGKT). The 182-residue stretch at 612–793 (DDLAGIVTGL…DEVLAIALLK (182 aa)) folds into the Lon proteolytic domain. Active-site residues include serine 699 and lysine 742.

This sequence belongs to the peptidase S16 family. Homohexamer. Organized in a ring with a central cavity.

Its subcellular location is the cytoplasm. The catalysed reaction is Hydrolysis of proteins in presence of ATP.. In terms of biological role, ATP-dependent serine protease that mediates the selective degradation of mutant and abnormal proteins as well as certain short-lived regulatory proteins. Required for cellular homeostasis and for survival from DNA damage and developmental changes induced by stress. Degrades polypeptides processively to yield small peptide fragments that are 5 to 10 amino acids long. Binds to DNA in a double-stranded, site-specific manner. The polypeptide is Lon protease (Cytophaga hutchinsonii (strain ATCC 33406 / DSM 1761 / CIP 103989 / NBRC 15051 / NCIMB 9469 / D465)).